The primary structure comprises 620 residues: Phosphopentomutase (620 aa).

The alpha-D-glucose 1,6-bisphosphate site is built by arginine 71 and serine 173. Serine 173 acts as the Phosphoserine intermediate in catalysis. Serine 173, aspartate 330, aspartate 332, and aspartate 334 together coordinate Mg(2+). Serine 173 is modified (phosphoserine). Aspartate 334, arginine 335, threonine 408, glutamate 432, and lysine 446 together coordinate alpha-D-glucose 1,6-bisphosphate.

Belongs to the phosphohexose mutase family. As to quaternary structure, monomer. Requires Mg(2+) as cofactor. Highly expressed in lung, spleen and thymus. Expressed at lower levels in liver, brain, kidney, skeletal muscle, testis and heart.

Its subcellular location is the cytoplasm. The protein resides in the cytosol. It carries out the reaction alpha-D-ribose 1-phosphate = D-ribose 5-phosphate. The catalysed reaction is 2-deoxy-alpha-D-ribose 1-phosphate = 2-deoxy-D-ribose 5-phosphate. The enzyme catalyses alpha-D-glucose 1-phosphate = alpha-D-glucose 6-phosphate. It catalyses the reaction O-phospho-L-seryl-[protein] + alpha-D-glucose 1-phosphate = alpha-D-glucose 1,6-bisphosphate + L-seryl-[protein]. It carries out the reaction alpha-D-glucose 1,6-bisphosphate + L-seryl-[protein] = O-phospho-L-seryl-[protein] + alpha-D-glucose 6-phosphate. In terms of biological role, catalyzes the conversion of the nucleoside breakdown products ribose-1-phosphate and deoxyribose-1-phosphate to the corresponding 5-phosphopentoses. Catalyzes the reversible isomerization of alpha-D-glucose 1-phosphate to alpha-D-glucose 6-phosphate but with a lower catalytic efficiency. The mechanism proceeds via the intermediate compound alpha-D-glucose 1,6-bisphosphate. In vitro, also has a low glucose 1,6-bisphosphate synthase activity which is most probably not physiologically relevant. The polypeptide is Phosphopentomutase (Mus musculus (Mouse)).